The primary structure comprises 178 residues: Gamma-crystallin S (178 aa).

S2 carries the post-translational modification N-acetylserine. The interval 2-5 (SKTG) is N-terminal arm. Beta/gamma crystallin 'Greek key' domains are found at residues 6–44 (AKIS…RVEG) and 45–87 (GTWA…RAVH). Residues 88–93 (LSSGGQ) form a connecting peptide region. Beta/gamma crystallin 'Greek key' domains are found at residues 94–134 (YKIQ…KVLE) and 135–177 (GTWI…RRIV).

The protein belongs to the beta/gamma-crystallin family. Monomer.

Functionally, crystallins are the dominant structural components of the vertebrate eye lens. This Rattus norvegicus (Rat) protein is Gamma-crystallin S (Crygs).